Reading from the N-terminus, the 646-residue chain is Serine/threonine-protein kinase max-2 (646 aa).

The segment at 19-40 is disordered; the sequence is FSPSDKDKDRDDEMKPSSSAMD. Basic and acidic residues predominate over residues 22 to 33; it reads SDKDKDRDDEMK. The region spanning 41–54 is the CRIB domain; it reads ISQPYNTVHRVHVG. The disordered stretch occupies residues 136 to 345; sequence LQCSNGSATS…PPPPEEPPVR (210 aa). Low complexity-rich tracts occupy residues 142–157 and 167–180; these read SATS…SSSA and LSTA…LSLS. A compositionally biased stretch (polar residues) spans 196–205; that stretch reads SAPQLKTFTG. A compositionally biased stretch (pro residues) spans 214–223; sequence SPFPPQPPVL. Low complexity predominate over residues 229-245; that stretch reads TASAVATTTTNPTTSNG. Over residues 246–262 the composition is skewed to pro residues; that stretch reads APPPVPGSKGPPVPPKP. Composition is skewed to low complexity over residues 273–307 and 323–334; these read SSGC…DGDV and KNGNTTTNKTTV. Positions 376–627 constitute a Protein kinase domain; sequence YEMKKQIGVG…TTELLAHPFL (252 aa). ATP-binding positions include 382–390 and lysine 405; that span reads IGVGASGTV. The Proton acceptor role is filled by aspartate 496.

Belongs to the protein kinase superfamily. STE Ser/Thr protein kinase family. STE20 subfamily. In terms of assembly, interacts with mlk-1; the interaction is independent of max-2 and mlk-1 kinase activities. Interacts with mig-2 (GTP-bound form). Mg(2+) serves as cofactor.

It localises to the perikaryon. It is found in the cell projection. The protein resides in the dendrite. Its subcellular location is the cytoplasm. It catalyses the reaction L-seryl-[protein] + ATP = O-phospho-L-seryl-[protein] + ADP + H(+). It carries out the reaction L-threonyl-[protein] + ATP = O-phospho-L-threonyl-[protein] + ADP + H(+). In terms of biological role, serine/threonine-protein kinase, which phosphorylates mlk-1. Involved in the stress response to heavy metals by activating the mlk-1/mek-1/kgb-1 pathway. In ventral cord commissural motoneurons, required for dorsal axon guidance downstream of unc-6/netrin repulsion receptor unc-5 and probably of Rho GTPases ced-10 and mig-2. Plays a redundant role with mig-10 in orientating axonal growth of HSN neurons. Plays a redundant role with pak-1 in P neuroblast migration and in distal tip cell (DTC)-mediated guidance of gonad elongation probably downstream of Rho GTPases. In association with pak-2, plays a role in embryogenesis. In association with pak-1, may be involved in spermatogenesis. The sequence is that of Serine/threonine-protein kinase max-2 from Caenorhabditis elegans.